The following is a 201-amino-acid chain: Recombination protein RecR (201 aa).

The C4-type zinc-finger motif lies at 57 to 74 (CRICGFITSKDDDPCVIC). Residues 82 to 178 (SKIFVVENSQ…KVTRLARGLS (97 aa)) form the Toprim domain.

The protein belongs to the RecR family.

In terms of biological role, may play a role in DNA repair. It seems to be involved in an RecBC-independent recombinational process of DNA repair. It may act with RecF and RecO. The polypeptide is Recombination protein RecR (Oenococcus oeni (strain ATCC BAA-331 / PSU-1)).